A 148-amino-acid polypeptide reads, in one-letter code: Protein Smg homolog (148 aa).

The protein belongs to the Smg family.

In Thiobacillus denitrificans (strain ATCC 25259 / T1), this protein is Protein Smg homolog.